The following is a 316-amino-acid chain: Cytochrome c biogenesis protein CcsA (316 aa).

The next 8 helical transmembrane spans lie at 19-39, 47-67, 77-97, 106-126, 151-171, 224-244, 258-275, and 285-305; these read VLTL…FSFW, SSIV…QLVF, ISNL…IQLL, LIQA…SFVL, VIMC…VVLL, TITF…VWAN, TWAF…HTRL, and AIIA…VNFL.

The protein belongs to the CcmF/CycK/Ccl1/NrfE/CcsA family. In terms of assembly, may interact with ccs1.

Its subcellular location is the cellular thylakoid membrane. Its function is as follows. Required during biogenesis of c-type cytochromes (cytochrome c6 and cytochrome f) at the step of heme attachment. The polypeptide is Cytochrome c biogenesis protein CcsA (Prochlorococcus marinus (strain SARG / CCMP1375 / SS120)).